A 368-amino-acid polypeptide reads, in one-letter code: Endophilin-A2 (368 aa).

Residues 1 to 21 (MSVAGLKKQFYKASQLVSEKV) are membrane-binding amphipathic helix. A BAR domain is found at 18–249 (SEKVGGAEGT…LKRRMREASS (232 aa)). The tract at residues 60 to 87 (PNPASRAKLTMLNTVSKIRGQVKNPGYP) is required for dimerization upon membrane association. The stretch at 145–250 (NLCEKDLKEI…KRRMREASSR (106 aa)) forms a coiled coil. The interaction with ARC stretch occupies residues 218-254 (LVDAQLDYHRQAVQILDELAEKLKRRMREASSRPKRE). Residues 244 to 308 (MREASSRPKR…PSRSMPPLDQ (65 aa)) are disordered. Residues 245–263 (REASSRPKREYKPKPREPF) are compositionally biased toward basic and acidic residues. Residues Ser-288 and Ser-292 each carry the phosphoserine modification. Phosphothreonine is present on Thr-298. Residues 306–365 (LDQPSCKALYDFEPENDGELGFHEGDVITLTNQIDENWYEGMLDGQSGFFPLSYVEVLVP) enclose the SH3 domain. Tyr-315 carries the post-translational modification Phosphotyrosine.

This sequence belongs to the endophilin family. Interacts with ARC. Interacts with SYNJ1 and DNM1. Interacts with PDCD6IP. Interacts with BIN2. As to expression, ubiquitous. Higher expression in pancreas, placenta, prostate, testis and uterus.

The protein localises to the cytoplasm. The protein resides in the early endosome membrane. It is found in the cell projection. It localises to the podosome. Its function is as follows. Implicated in endocytosis. May recruit other proteins to membranes with high curvature. This Homo sapiens (Human) protein is Endophilin-A2 (SH3GL1).